We begin with the raw amino-acid sequence, 1296 residues long: DNA-directed RNA polymerase subunit beta' (1296 aa).

Cysteine 60, cysteine 62, cysteine 75, and cysteine 78 together coordinate Zn(2+). Residues 188-209 (GAKGDARRKVRESAEREMRQIR) form a disordered region. 3 residues coordinate Mg(2+): aspartate 535, aspartate 537, and aspartate 539. The Zn(2+) site is built by cysteine 877, cysteine 954, cysteine 961, and cysteine 964.

Belongs to the RNA polymerase beta' chain family. As to quaternary structure, the RNAP catalytic core consists of 2 alpha, 1 beta, 1 beta' and 1 omega subunit. When a sigma factor is associated with the core the holoenzyme is formed, which can initiate transcription. The cofactor is Mg(2+). Zn(2+) serves as cofactor.

It carries out the reaction RNA(n) + a ribonucleoside 5'-triphosphate = RNA(n+1) + diphosphate. Its function is as follows. DNA-dependent RNA polymerase catalyzes the transcription of DNA into RNA using the four ribonucleoside triphosphates as substrates. The polypeptide is DNA-directed RNA polymerase subunit beta' (Parafrankia sp. (strain EAN1pec)).